The sequence spans 335 residues: Tetraacyldisaccharide 4'-kinase (335 aa).

58-65 is a binding site for ATP; that stretch reads TVGGNGKT.

This sequence belongs to the LpxK family.

It carries out the reaction a lipid A disaccharide + ATP = a lipid IVA + ADP + H(+). It participates in glycolipid biosynthesis; lipid IV(A) biosynthesis; lipid IV(A) from (3R)-3-hydroxytetradecanoyl-[acyl-carrier-protein] and UDP-N-acetyl-alpha-D-glucosamine: step 6/6. In terms of biological role, transfers the gamma-phosphate of ATP to the 4'-position of a tetraacyldisaccharide 1-phosphate intermediate (termed DS-1-P) to form tetraacyldisaccharide 1,4'-bis-phosphate (lipid IVA). The chain is Tetraacyldisaccharide 4'-kinase from Dichelobacter nodosus (strain VCS1703A).